A 730-amino-acid polypeptide reads, in one-letter code: Acetylene hydratase (730 aa).

[4Fe-4S] cluster contacts are provided by Cys-9 and Cys-12. The active site involves Asp-13. [4Fe-4S] cluster is bound by residues Cys-16 and Cys-46. Residues Lys-48, 111–114 (TEIN), Cys-141, 172–173 (KN), 177–179 (HNW), 199–202 (LDPR), 218–221 (YGTD), Ser-296, Gln-300, 416–418 (ASN), 422–423 (GY), 442–444 (YDQ), Asp-460, Arg-465, 602–613 (FAGLREDSNFQS), Arg-606, His-676, Asp-699, and Arg-720 contribute to the W-bis(molybdopterin guanine dinucleotide) site.

Belongs to the prokaryotic molybdopterin-containing oxidoreductase family. As to quaternary structure, monomer. It depends on [4Fe-4S] cluster as a cofactor. W-bis(molybdopterin guanine dinucleotide) serves as cofactor.

The catalysed reaction is acetaldehyde = acetylene + H2O. Catalyzes the hydration of acetylene to form acetaldehyde. Ethylene cannot act as a substrate. This is Acetylene hydratase from Syntrophotalea acetylenica (Pelobacter acetylenicus).